The chain runs to 2465 residues: MNTEELELLSDSKYRNYVAAIDKALKNFEYSSEWADLISALGKLNKVLQNNAKYQVVPKKLTIGKRLAQCLHPALPGGVHRKALETYEIIFKIIGPKRLAKDLFLYSSGLFPLLANAAMSVKPTLLSLYEIYYLPLGKTLKPGLQGLLTGILPGLEEGSEYYERTNMLLEKVAAAVDQSAFYSALWGSLLTSPAVRLPGITYVLAHLNRKLSMEDQLYIIGSDIELMVEAVSTSVQDSSVLVQRSTLDLILFCFPFHMSQATRPDMIRILSAALHVVLRRDMSLNRRLYAWLLGFDNNGAIIGPRSTRHSNPEEHATYYFTTFSKELLVQAMVGILQVNGFGEENTLMQDLKPFRILISLLDKPELGPVILEDVLIEVFRTLYSQCKAELDLQTEPPFSKDHAQLSSKLRENKKTAELIKTANLLFNSFEPYYMWDYVARWFEECCRRTLHVRLQIGPGDSNDSSELQLTNFCLLVDFLLDIVSLPTRSMRVLCQETYIEIQTEHLPQLLLRMISALTSHLQTLHLSELTDSLRLCSKILSKVQPPLLSASTGGVLQFPSGQNNSVKEWEDKKVSSVSHENPTEVFEDGENPPSSRSSESGFTEFIQYQADRTDDIDRELSEGQGAAAIPIGSTSSETETASTVGSEETIIQTPSVVTQGTATRSRKTAQKTAMQCCLEYVQQFLTRLINLYIIQNNSFSQSLATEHQGDLGREQGETSKWDRNSQGDVKEKNISKQKTSKEYLSAFLAACQLFLECSSFPVYIAEGNHTSELRSEKLETDCEHVQPPQWLQTLMNACSQASDFSVQSVAISLVMDLVGLTQSVAMVTGENINSVEPAQPLSPNQGRVAVVIRPPLTQGNLRYIAEKTEFFKHVALTLWDQLGDGTPQHHQKSVELFYQLHNLVPSSSICEDVISQQLTHKDKKIRMEAHAKFAVLWHLTRDLHINKSSSFVRSFDRSLFIMLDSLNSLDGSTSSVGQAWLNQVLQRHDIARVLEPLLLLLLHPKTQRVSVQRVQAERYWNKSPCYPGEESDKHFMQNFACSNVSQVQLITSKGNGEKPLTMDEIENFSLTVNPLSDRLSLLSTSSETIPMVVSDFDLPDQQIEILQSSDSGCSQSSAGDNLSYEVDPETVNAQEDSQMPKESSPDDDVQQVVFDLICKVVSGLEVESASVTSQLEIEAMPPKCSDIDPDEETIKIEDDSIQQSQNALLSNESSQFLSVSAEGGHECVANGISRNSSSPCISGTTHTLHDSSVASIETKSRQRSHSSIQFSFKEKLSEKVSEKETIVKESGKQPGAKPKVKLARKKDDDKKKSSNEKLKQTSVFFSDGLDLENWYSCGEGDISEIESDMGSPGSRKSPNFNIHPLYQHVLLYLQLYDSSRTLYAFSAIKAILKTNPIAFVNAISTTSVNNAYTPQLSLLQNLLARHRISVMGKDFYSHIPVDSNHNFRSSMYIEILISLCLYYMRSHYPTHVKVTAQDLIGNRNMQMMSIEILTLLFTELAKVIESSAKGFPSFISDMLSKCKVQKVILHCLLSSIFSAQKWHSEKMAGKNLVAVEEGFSEDSLINFSEDEFDNGSTLQSQLLKVLQRLIVLEHRVMTIPEENETGFDFVVSDLEHISPHQPMTSLQYLHAQPITCQGMFLCAVIRALHQHCACKMHPQWIGLITSTLPYMGKVLQRVVVSVTLQLCRNLDNLIQQYKYETGLSDSRPLWMASIIPPDMILTLLEGITAIIHYCLLDPTTQYHQLLVSVDQKHLFEARSGILSILHMIMSSVTLLWSILHQADSSEKMTIAASASLTTINLGATKNLRQQILELLGPISMNHGVHFMAAIAFVWNERRQNKTTTRTKVIPAASEEQLLLVELVRSISVMRAETVIQTVKEVLKQPPAIAKDKKHLSLEVCMLQFFYAYIQRIPVPNLVDSWASLLILLKDSIQLSLPAPGQFLILGVLNEFIMKNPSLENKKDQRDLQDVTHKIVDAIGAIAGSSLEQTTWLRRNLEVKPSPKIMVDGTNLESDVEDMLSPAMETANITPSVYSVHALTLLSEVLAHLLDMVFYSDEKERVIPLLVNIMHYVVPYLRNHSAHNAPSYRACVQLLSSLSGYQYTRRAWKKEAFDLFMDPSFFQMDASCVNHWRAIMDNLMTHDKTTFRDLMTRVAVAQSSSLNLFANRDVELEQRAMLLKRLAFAIFSSEIDQYQKYLPDIQERLVESLRLPQVPTLHSQVFLFFRVLLLRMSPQHLTSLWPTMITELVQVFLLMEQELTADEDISRTSGPSVAGLETTYTGGNGFSTSYNSQRWLNLYLSACKFLDLALALPSENLPQFQMYRWAFIPEASDDSGLEVRRQGIHQREFKPYVVRLAKLLRKRAKKNPEEDNSGRTLGWEPGHLLLTICTVRSMEQLLPFFNVLSQVFNSKVTSRCGGHSGSPILYSNAFPNKDMKLENHKPCSSKARQKIEEMVEKDFLEGMIKT.

Disordered stretches follow at residues 559–600 (PSGQ…SSES), 625–646 (GAAA…TVGS), and 705–733 (TEHQ…KEKN). Residues 633 to 646 (STSSETETASTVGS) show a composition bias toward low complexity. The segment covering 707-733 (HQGDLGREQGETSKWDRNSQGDVKEKN) has biased composition (basic and acidic residues). The residue at position 1266 (S1266) is a Phosphoserine. Composition is skewed to basic and acidic residues over residues 1282–1291 (EKETIVKESG) and 1305–1315 (KKDDDKKKSSN). The disordered stretch occupies residues 1282-1315 (EKETIVKESGKQPGAKPKVKLARKKDDDKKKSSN).

Belongs to the DOP1 family.

Its subcellular location is the golgi apparatus membrane. Functionally, may be involved in protein traffic between late Golgi and early endosomes. The sequence is that of Protein DOP1A from Homo sapiens (Human).